A 633-amino-acid polypeptide reads, in one-letter code: Histone-lysine N-methyltransferase Su(var)3-9 (633 aa).

Positions Tyr-213–Ile-271 constitute a Chromo domain. In terms of domain architecture, Pre-SET spans Val-407–Gly-472. 9 residues coordinate Zn(2+): Cys-409, Cys-411, Cys-419, Cys-425, Cys-426, Cys-454, Cys-458, Cys-460, and Cys-464. The SET domain occupies His-475–Ile-601. S-adenosyl-L-methionine contacts are provided by residues Ser-486 to Trp-488, Tyr-529, and Asn-558 to His-559. Residues Cys-561, Cys-621, Cys-623, and Cys-628 each contribute to the Zn(2+) site. Positions Ala-617 to Phe-633 constitute a Post-SET domain.

It belongs to the class V-like SAM-binding methyltransferase superfamily. Histone-lysine methyltransferase family. Suvar3-9 subfamily. As to quaternary structure, interacts with Su(var)205 and Su(var)3-7. Probably associates with HDAC1/Rpd3.

The protein localises to the nucleus. The protein resides in the chromosome. Its subcellular location is the centromere. It catalyses the reaction L-lysyl(9)-[histone H3] + 3 S-adenosyl-L-methionine = N(6),N(6),N(6)-trimethyl-L-lysyl(9)-[histone H3] + 3 S-adenosyl-L-homocysteine + 3 H(+). Histone methyltransferase that specifically trimethylates 'Lys-9' of histone H3 using monomethylated H3 'Lys-9' as substrate. H3 'Lys-9' trimethylation represents a specific tag for epigenetic transcriptional repression by recruiting Su(var)205/HP1 to methylated histones. Mainly functions in heterochromatin regions, thereby playing a central role in the establishment of constitutive heterochromatin at pericentric regions. Involved in heterochromatic gene silencing including the modification of position-effect-variegation. The sequence is that of Histone-lysine N-methyltransferase Su(var)3-9 (Su(var)3-9) from Drosophila pseudoobscura pseudoobscura (Fruit fly).